The sequence spans 300 residues: tRNA dimethylallyltransferase (300 aa).

18–25 (GPTATGKS) is a binding site for ATP. 20 to 25 (TATGKS) provides a ligand contact to substrate. The segment at 43 to 46 (DSRQ) is interaction with substrate tRNA.

The protein belongs to the IPP transferase family. In terms of assembly, monomer. Mg(2+) is required as a cofactor.

It carries out the reaction adenosine(37) in tRNA + dimethylallyl diphosphate = N(6)-dimethylallyladenosine(37) in tRNA + diphosphate. Catalyzes the transfer of a dimethylallyl group onto the adenine at position 37 in tRNAs that read codons beginning with uridine, leading to the formation of N6-(dimethylallyl)adenosine (i(6)A). This chain is tRNA dimethylallyltransferase, found in Cyanothece sp. (strain PCC 7425 / ATCC 29141).